A 103-amino-acid chain; its full sequence is Pro-glucagon (103 aa).

This sequence belongs to the glucagon family.

The protein resides in the secreted. Plays a key role in glucose metabolism and homeostasis. Regulates blood glucose by increasing gluconeogenesis and decreasing glycolysis. The protein is Pro-glucagon (gcg) of Aquarana catesbeiana (American bullfrog).